The following is a 463-amino-acid chain: MSRRQTLKTLQKLILAPSQHISLSIASNLSVIPSRSMTTTATVPVLPTSIHDGLGKGIAYEKSLPRPVNPFSHRVPGREIITIPKFTLESGVEMRNVPVAYMSWGKLSSKANNVMIICHALSGSADVSDWWGPLLGHGKAFDTDKFFVICMNSLGSPYGTASPVTAKNGDYSEGWYGADFPSTTIRDDVRLHKLALDKLGVRKVAAAIGGSMGGMHVLEWAFFGKDYVRCIVPAATSSHQSAWAIGWGEAQRHAIRSDVKYKNGRYGFDDPPVLGLEAARMTALLTYRSRDSLERRFGRDTGSKKKTQKQESKTLPSNSTPIHSHSGADETPVAFDRADSSFAAQSYLRYQAKKFSNRFDSNCYIALTNKLDTHDLARGRTRTITEALSLIEQPTLVLGIRSDGLYTLAEQEQIARAVPNAKLREIVSDDGHDAFLIEWSQLNWLLIGFLHESLPDIMQRAAL.

The AB hydrolase-1 domain occupies 113–436 (NVMIICHALS…VSDDGHDAFL (324 aa)). The active-site Nucleophile is S211. The segment covering 296-312 (RFGRDTGSKKKTQKQES) has biased composition (basic and acidic residues). The interval 296–331 (RFGRDTGSKKKTQKQESKTLPSNSTPIHSHSGADET) is disordered. Active-site residues include D403 and H432.

Belongs to the AB hydrolase superfamily. MetX family.

It catalyses the reaction L-homoserine + acetyl-CoA = O-acetyl-L-homoserine + CoA. Its pathway is mycotoxin biosynthesis. In terms of biological role, homoserine O-acetyltransferase; part of the gene cluster that mediates the biosynthesis of fusaric acid, a mycotoxin with low to moderate toxicity to animals and humans, but with high phytotoxic properties. L-aspartate is suggested as fusaric acid amino acid precursor that is activated and further processed to O-acetyl-L-homoserine by cluster enzymes aspartate kinase FUB3 and homoserine O-acetyltransferase FUB5, as well as enzymes of the primary metabolism. The polyketide synthase (PKS) FUB1 generates the triketide trans-2-hexenal which is presumptively released by the hydrolase FUB4 and linked to the NRPS-bound amino acid precursor by NAD(P)-dependent dehydrogenase FUB6. FUB1, FUB4, and the non-canonical NRPS Fub8 may form an enzyme complex. Further processing of the NRPS-bound intermediate might be carried out by FUB6 and the sulfhydrylase FUB7, enabling a spontaneous electrocyclization to close the carbon backbone of fusaric acid. Dihydrofusaric acid is likely to be released via reduction by the thioester reductase (TR) domain of FUB8 whereupon the final oxidation to fusaric acid may (also) be performed by the FMN-dependent dehydrogenase FUB9. This chain is Homoserine O-acetyltransferase FUB5, found in Gibberella moniliformis (strain M3125 / FGSC 7600) (Maize ear and stalk rot fungus).